Consider the following 120-residue polypeptide: ATP-dependent Clp protease adapter protein ClpS (120 aa).

Residues 1–20 form a disordered region; that stretch reads MATKSPVNPKVPLVQEPDRD.

Belongs to the ClpS family. As to quaternary structure, binds to the N-terminal domain of the chaperone ClpA.

Functionally, involved in the modulation of the specificity of the ClpAP-mediated ATP-dependent protein degradation. The protein is ATP-dependent Clp protease adapter protein ClpS of Albidiferax ferrireducens (strain ATCC BAA-621 / DSM 15236 / T118) (Rhodoferax ferrireducens).